The following is a 185-amino-acid chain: NADH-quinone oxidoreductase subunit B (185 aa).

The [4Fe-4S] cluster site is built by Cys37, Cys38, Cys103, and Cys132.

The protein belongs to the complex I 20 kDa subunit family. In terms of assembly, NDH-1 is composed of 14 different subunits. Subunits NuoB, C, D, E, F, and G constitute the peripheral sector of the complex. [4Fe-4S] cluster is required as a cofactor.

It localises to the cell membrane. The catalysed reaction is a quinone + NADH + 5 H(+)(in) = a quinol + NAD(+) + 4 H(+)(out). Its function is as follows. NDH-1 shuttles electrons from NADH, via FMN and iron-sulfur (Fe-S) centers, to quinones in the respiratory chain. The immediate electron acceptor for the enzyme in this species is believed to be a menaquinone. Couples the redox reaction to proton translocation (for every two electrons transferred, four hydrogen ions are translocated across the cytoplasmic membrane), and thus conserves the redox energy in a proton gradient. The protein is NADH-quinone oxidoreductase subunit B of Thermobifida fusca (strain YX).